A 1177-amino-acid chain; its full sequence is uncharacterized protein (1177 aa).

The N-terminal stretch at 1 to 26 (MKKLLKKSKFWWFLLCGLSVSTILVA) is a signal peptide. Residue cysteine 27 is the site of N-palmitoyl cysteine attachment. The S-diacylglycerol cysteine moiety is linked to residue cysteine 27.

Belongs to the MG307/MG309/MG338 family.

It localises to the cell membrane. This is an uncharacterized protein from Mycoplasma genitalium (strain ATCC 33530 / DSM 19775 / NCTC 10195 / G37) (Mycoplasmoides genitalium).